The chain runs to 141 residues: Putative pre-16S rRNA nuclease (141 aa).

This sequence belongs to the YqgF nuclease family.

The protein localises to the cytoplasm. Could be a nuclease involved in processing of the 5'-end of pre-16S rRNA. The polypeptide is Putative pre-16S rRNA nuclease (Syntrophomonas wolfei subsp. wolfei (strain DSM 2245B / Goettingen)).